We begin with the raw amino-acid sequence, 80 residues long: Regulatory protein HrpD6 (80 aa).

Its function is as follows. Involved in the regulation of several genes of the hrp-hrc-hpa cluster, which encodes a type III secretion system (T3SS). Upregulates the expression of hpa2, hpa1 and hpaB and partially controls the expression of hrcC and hrcT. Controls the secretion of the T3SS TAL effector AvrXa27. Also regulates the expression of several HrpX-regulated protein (Xrp) genes. Has no influence on hrpG or hrpX expression. This Xanthomonas oryzae pv. oryzicola protein is Regulatory protein HrpD6.